The following is a 549-amino-acid chain: TBC1 domain family member 3E (549 aa).

A Rab-GAP TBC domain is found at G101–G293. S-palmitoyl cysteine attachment occurs at residues C318 and C325. The tract at residues L350–G419 is disordered. The span at P398–P417 shows a compositional bias: low complexity.

Ubiquitinated by a CUL7-based E3 ligase, which leads to proteasomal degradation. Post-translationally, palmitoylation is required for membrane localization and protects TBC1D3 from ubiquitination. Expressed in pancreas, thymus and testis.

The protein localises to the cell membrane. Functionally, acts as a GTPase activating protein for RAB5. Does not act on RAB4 or RAB11. This Homo sapiens (Human) protein is TBC1 domain family member 3E.